A 285-amino-acid chain; its full sequence is Nucleotide-binding protein Pmen_0867 (285 aa).

ATP is bound at residue G8–S15. A GTP-binding site is contributed by D60–N63.

This sequence belongs to the RapZ-like family.

Its function is as follows. Displays ATPase and GTPase activities. The polypeptide is Nucleotide-binding protein Pmen_0867 (Ectopseudomonas mendocina (strain ymp) (Pseudomonas mendocina)).